We begin with the raw amino-acid sequence, 73 residues long: Translation initiation factor IF-1 (73 aa).

The region spanning 1–73 (MAKKDGVIEL…ARGRIVYRYK (73 aa)) is the S1-like domain.

It belongs to the IF-1 family. As to quaternary structure, component of the 30S ribosomal translation pre-initiation complex which assembles on the 30S ribosome in the order IF-2 and IF-3, IF-1 and N-formylmethionyl-tRNA(fMet); mRNA recruitment can occur at any time during PIC assembly.

The protein resides in the cytoplasm. Its function is as follows. One of the essential components for the initiation of protein synthesis. Stabilizes the binding of IF-2 and IF-3 on the 30S subunit to which N-formylmethionyl-tRNA(fMet) subsequently binds. Helps modulate mRNA selection, yielding the 30S pre-initiation complex (PIC). Upon addition of the 50S ribosomal subunit IF-1, IF-2 and IF-3 are released leaving the mature 70S translation initiation complex. The chain is Translation initiation factor IF-1 from Tropheryma whipplei (strain TW08/27) (Whipple's bacillus).